Reading from the N-terminus, the 493-residue chain is 3-octaprenyl-4-hydroxybenzoate carboxy-lyase (493 aa).

Asn-172 is a Mn(2+) binding site. Prenylated FMN contacts are provided by residues 175-177, 189-191, and 194-195; these read IYR, RWL, and RG. Glu-238 lines the Mn(2+) pocket. The Proton donor role is filled by Asp-287.

It belongs to the UbiD family. In terms of assembly, homohexamer. The cofactor is prenylated FMN. It depends on Mn(2+) as a cofactor.

It localises to the cell membrane. The enzyme catalyses a 4-hydroxy-3-(all-trans-polyprenyl)benzoate + H(+) = a 2-(all-trans-polyprenyl)phenol + CO2. It participates in cofactor biosynthesis; ubiquinone biosynthesis. Catalyzes the decarboxylation of 3-octaprenyl-4-hydroxy benzoate to 2-octaprenylphenol, an intermediate step in ubiquinone biosynthesis. The sequence is that of 3-octaprenyl-4-hydroxybenzoate carboxy-lyase from Shewanella denitrificans (strain OS217 / ATCC BAA-1090 / DSM 15013).